The following is an 8799-amino-acid chain: Nesprin-1 (8799 aa).

Residues 1 to 289 (MATSRASSRS…TQYPDIHGAG (289 aa)) are actin-binding. At 1–8748 (MATSRASSRS…GRAFLFRILR (8748 aa)) the chain is on the cytoplasmic side. 2 Calponin-homology (CH) domains span residues 27-134 (IVQK…LYFQ) and 178-283 (GNAK…TQYP). 52 Spectrin repeats span residues 314 to 397 (RDDR…SRLF), 398 to 502 (DWHI…HLMK), 503 to 609 (MEFL…SMLE), 610 to 703 (EVIS…YARA), 704 to 815 (DEMD…QLTV), 816 to 923 (PLEE…KHVE), 924 to 1024 (ANSR…HLKI), 1025 to 1122 (AVEK…LVDD), 1123 to 1246 (PDKW…SSLE), 1247 to 1333 (GLIS…ERRI), 1334 to 1442 (QVSL…MEMV), 1443 to 1548 (KSKW…ILGH), 1549 to 1651 (LSQQ…LEDL), 1652 to 1761 (LARW…LQSV), 1762 to 1877 (LAEH…SHAC), 1878 to 1974 (MSTL…ADAL), 1975 to 2079 (VALK…QGQC), 2080 to 2193 (CGLI…LRVS), 2194 to 2301 (LSIW…KDFT), 2302 to 2399 (AQRT…QTQA), 2400 to 2511 (RIQD…LQDC), 2512 to 2617 (VSEL…LRSC), 2618 to 2729 (QLAL…LESV), 2730 to 2836 (IDQW…VEDL), 2837 to 2960 (VKDH…FGQV), 2961 to 3060 (TQLE…QNKE), 3061 to 3169 (QILQ…LENL), 3170 to 3273 (KIQM…VSRL), 3274 to 3385 (DRII…LEGA), 3386 to 3488 (LSKW…LEKL), 3489 to 3591 (VRLH…RMQL), 3592 to 3718 (NNVV…YSDW), 3719 to 3812 (YGST…LEKG), 3813 to 3918 (LHLA…LEAK), 3919 to 4026 (VKDH…QRVY), 4027 to 4137 (RSLE…KSLK), 4138 to 4233 (AELW…REQD), 4234 to 4337 (LQRT…IQVS), 4338 to 4449 (VTNL…LNKA), 4450 to 4558 (LSEK…LEKS), 4559 to 4667 (LVSR…TQEA), 4668 to 4774 (ILAR…LEDT), 4775 to 4880 (TSVY…CESR), 4881 to 4989 (MVQS…LTEI), 4990 to 5097 (YSRC…LQRC), 5098 to 5207 (MVQW…LEDA), 5208 to 5316 (VDEW…GKLV), 5317 to 5422 (KQEL…EEGK), 5423 to 5520 (AMSQ…LSKL), 5521 to 5628 (NQAL…LQDA), 5629 to 5745 (AKDM…PKEA), and 5746 to 5851 (VVQY…PSAH). Residues 314-8666 (RDDRLILKET…DLEKLLDMSS (8353 aa)) adopt a coiled-coil conformation. The residue at position 377 (K377) is a Phosphoserine. Phosphoserine is present on S732. A disordered region spans residues 1288 to 1310 (KKRDLQEQMEQAQQGGQAGPGQE). Phosphothreonine is present on T2268. A Phosphoserine modification is found at S5655. The segment at 5868-5894 (PVTEESGEEGTNSEISSPPACRSPSPV) is disordered. 19 Spectrin repeats span residues 5971-6080 (LERQ…LEEK), 6081-6187 (LSDQ…SLGE), 6377-6488 (RQSI…RLQQ), 6489-6584 (ILRF…RSSL), 6585-6694 (HQNL…LEMW), 6695-6798 (SHLD…TILK), 6799-6905 (HWTR…QEKL), 6906-7023 (HQLQ…LEGL), 7024-7131 (LESW…LTSA), 7132-7240 (LGQW…SKAL), 7241-7353 (LQLW…LQAG), 7354-7457 (VVDY…LQSF), 7458-7561 (LLQH…RGII), 7562-7674 (DSQI…LAFL), 7675-7786 (LKDW…NEWA), 7787-7886 (VFSE…LKET), 7887-8000 (LVAV…IEET), 8001-8109 (WRLW…LKHF), and 8110-8221 (ISQR…VRLP). A phosphoserine mark is found at D8225 and S8227. The tract at residues 8237–8287 (TALSDLRWQDPSADGMPSPQPSSNPSLSLPQPLRSERSGRDTPASVDSIPL) is disordered. A compositionally biased stretch (low complexity) spans 8257 to 8269 (PSSNPSLSLPQPL). Residue T8278 is modified to Phosphothreonine. Residues S8281, S8284, and S8308 each carry the phosphoserine modification. Spectrin repeat units lie at residues 8332–8440 (SSLE…MKQN), 8441–8550 (LQKW…LQDA), and 8551–8668 (LMQC…SSSQ). The residue at position 8363 (T8363) is a Phosphothreonine. A disordered region spans residues 8673–8735 (SWSSADELDT…SDSSRSDPRP (63 aa)). Composition is skewed to polar residues over residues 8682–8698 (TSGS…PNRQ) and 8706–8718 (SLSQ…SSPK). Over residues 8721-8735 (STRDGSDSSRSDPRP) the composition is skewed to basic and acidic residues. The region spanning 8740–8799 (RAFLFRILRAALPFQLLLLLLIGLTCLVPMSEKDYSCALSNNFARSFHPMLRYTNGPPPL) is the KASH domain. Residues 8749 to 8769 (AALPFQLLLLLLIGLTCLVPM) form a helical; Anchor for type IV membrane protein membrane-spanning segment. Residues 8770–8799 (SEKDYSCALSNNFARSFHPMLRYTNGPPPL) lie on the Perinuclear space side of the membrane.

Belongs to the nesprin family. As to quaternary structure, core component of LINC complexes which are composed of inner nuclear membrane SUN domain-containing proteins coupled to outer nuclear membrane KASH domain-containing nesprins. SUN and KASH domain-containing proteins seem to bind each other promiscuously; however, differentially expression of LINC complex constituents can give rise to specific assemblies. At least SUN1/2-containing core LINC complexes are proposed to be hexameric composed of three protomers of each KASH and SUN domain-containing protein. The SUN2:SYNE1/KASH1 LINC complex is a heterohexamer; the homotrimeric cloverleave-like conformation of the SUN domain is a prerequisite for LINC complex formation in which three separate SYNE1/KASH1 peptides bind at the interface of adjacent SUN domains. Self-associates. Interacts with SYNE3. Interacts with SUN3; proposed to form a spermatogenesis-specific LINC complex with SUN3 during sperm head formation. May interact with MUSK. Interacts with SPAG4/SUN4. Interacts with EMD and LMNA in vitro. Interacts with F-actin via its N-terminal domain. Interacts with DCTN1 and DYNC1I1/2; suggesting the association with the dynein-dynactin motor complex. Interacts (via KASH domain) with TMEM258. Post-translationally, the disulfid bond with SUN1 or SUN2 is required for stability of the respective LINC complex under tensile forces. Expressed in C2F3 and CH310T1/2 cells, brain and skeletal muscle (at protein level).

The protein resides in the nucleus outer membrane. It localises to the nucleus. Its subcellular location is the nucleus envelope. The protein localises to the cytoplasm. It is found in the cytoskeleton. The protein resides in the myofibril. It localises to the sarcomere. In terms of biological role, multi-isomeric modular protein which forms a linking network between organelles and the actin cytoskeleton to maintain the subcellular spatial organization. As a component of the LINC (LInker of Nucleoskeleton and Cytoskeleton) complex involved in the connection between the nuclear lamina and the cytoskeleton. The nucleocytoplasmic interactions established by the LINC complex play an important role in the transmission of mechanical forces across the nuclear envelope and in nuclear movement and positioning. May be involved in nucleus-centrosome attachment. During interkinetic nuclear migration (INM) at G2 phase and nuclear migration in neural progenitors its LINC complex association with SUN1/2 and probably association with cytoplasmic dynein-dynactin motor complexes functions to pull the nucleus toward the centrosome; SYNE1 and SYNE2 seem to act redundantly in cerebellum, midbrain, brain stem, and other brain regions except cerebral cortex and hippocampus. Required for centrosome migration to the apical cell surface during early ciliogenesis. May be involved in nuclear remodeling during sperm head formation in spermatogenesis; a probable SUN3:SYNE1/KASH1 LINC complex may tether spermatid nuclei to posterior cytoskeletal structures such as the manchette. This Mus musculus (Mouse) protein is Nesprin-1.